A 250-amino-acid polypeptide reads, in one-letter code: 3-deoxy-manno-octulosonate cytidylyltransferase (250 aa).

The protein belongs to the KdsB family.

The protein localises to the cytoplasm. It carries out the reaction 3-deoxy-alpha-D-manno-oct-2-ulosonate + CTP = CMP-3-deoxy-beta-D-manno-octulosonate + diphosphate. Its pathway is nucleotide-sugar biosynthesis; CMP-3-deoxy-D-manno-octulosonate biosynthesis; CMP-3-deoxy-D-manno-octulosonate from 3-deoxy-D-manno-octulosonate and CTP: step 1/1. It functions in the pathway bacterial outer membrane biogenesis; lipopolysaccharide biosynthesis. In terms of biological role, activates KDO (a required 8-carbon sugar) for incorporation into bacterial lipopolysaccharide in Gram-negative bacteria. This Francisella tularensis subsp. holarctica (strain LVS) protein is 3-deoxy-manno-octulosonate cytidylyltransferase.